The chain runs to 494 residues: UDP-N-acetylmuramate--L-alanine ligase (494 aa).

134-140 (GSHGKTT) lines the ATP pocket.

It belongs to the MurCDEF family.

It localises to the cytoplasm. It carries out the reaction UDP-N-acetyl-alpha-D-muramate + L-alanine + ATP = UDP-N-acetyl-alpha-D-muramoyl-L-alanine + ADP + phosphate + H(+). The protein operates within cell wall biogenesis; peptidoglycan biosynthesis. Functionally, cell wall formation. In Prochlorococcus marinus (strain NATL1A), this protein is UDP-N-acetylmuramate--L-alanine ligase.